The following is a 434-amino-acid chain: Probable G-protein coupled receptor B0563.6 (434 aa).

N12 is a glycosylation site (N-linked (GlcNAc...) asparagine). The next 2 helical transmembrane spans lie at 30-50 and 65-85; these read VLPC…MVLA and LAVA…TEYL. N-linked (GlcNAc...) asparagine glycosylation occurs at N88. 2 helical membrane-spanning segments follow: residues 105–125 and 147–167; these read LMLT…VALS and ATRA…PYAI. N-linked (GlcNAc...) asparagine glycosylation is present at N181. 2 consecutive transmembrane segments (helical) span residues 208–228 and 258–278; these read ILRF…MIAF and GGTV…LLLI. N429 and N430 each carry an N-linked (GlcNAc...) asparagine glycan.

This sequence belongs to the G-protein coupled receptor 1 family.

The protein resides in the cell membrane. In terms of biological role, not known. Putative receptor. This chain is Probable G-protein coupled receptor B0563.6, found in Caenorhabditis elegans.